The primary structure comprises 323 residues: Acetyl-coenzyme A carboxylase carboxyl transferase subunit alpha (323 aa).

The CoA carboxyltransferase C-terminal domain occupies 39–293; sequence RLSKKSQQLT…RRALADSLRQ (255 aa).

The protein belongs to the AccA family. As to quaternary structure, acetyl-CoA carboxylase is a heterohexamer composed of biotin carboxyl carrier protein (AccB), biotin carboxylase (AccC) and two subunits each of ACCase subunit alpha (AccA) and ACCase subunit beta (AccD).

The protein resides in the cytoplasm. It catalyses the reaction N(6)-carboxybiotinyl-L-lysyl-[protein] + acetyl-CoA = N(6)-biotinyl-L-lysyl-[protein] + malonyl-CoA. It functions in the pathway lipid metabolism; malonyl-CoA biosynthesis; malonyl-CoA from acetyl-CoA: step 1/1. Component of the acetyl coenzyme A carboxylase (ACC) complex. First, biotin carboxylase catalyzes the carboxylation of biotin on its carrier protein (BCCP) and then the CO(2) group is transferred by the carboxyltransferase to acetyl-CoA to form malonyl-CoA. This Burkholderia multivorans (strain ATCC 17616 / 249) protein is Acetyl-coenzyme A carboxylase carboxyl transferase subunit alpha.